Here is a 413-residue protein sequence, read N- to C-terminus: 2,3-diketo-5-methylthiopentyl-1-phosphate enolase (413 aa).

Residue K98 is the Proton acceptor of the active site. Residues K147, 173-176, H264, G337, and 359-360 contribute to the substrate site; these read KDDE and GG. Positions 173, 175, and 176 each coordinate Mg(2+). At K173 the chain carries N6-carboxylysine.

It belongs to the RuBisCO large chain family. Type IV subfamily. In terms of assembly, homodimer. Requires Mg(2+) as cofactor.

It catalyses the reaction 5-methylsulfanyl-2,3-dioxopentyl phosphate = 2-hydroxy-5-methylsulfanyl-3-oxopent-1-enyl phosphate. Its pathway is amino-acid biosynthesis; L-methionine biosynthesis via salvage pathway; L-methionine from S-methyl-5-thio-alpha-D-ribose 1-phosphate: step 3/6. In terms of biological role, catalyzes the enolization of 2,3-diketo-5-methylthiopentyl-1-phosphate (DK-MTP-1-P) into 2-hydroxy-3-keto-5-methylthiopentenyl-1-phosphate (HK-MTPenyl-1-P). This Geobacillus kaustophilus (strain HTA426) protein is 2,3-diketo-5-methylthiopentyl-1-phosphate enolase (mtnW).